The chain runs to 376 residues: Putative glutamate--cysteine ligase 2-1 (376 aa).

It belongs to the glutamate--cysteine ligase type 2 family. YbdK subfamily.

It catalyses the reaction L-cysteine + L-glutamate + ATP = gamma-L-glutamyl-L-cysteine + ADP + phosphate + H(+). Its function is as follows. ATP-dependent carboxylate-amine ligase which exhibits weak glutamate--cysteine ligase activity. This chain is Putative glutamate--cysteine ligase 2-1, found in Mycolicibacterium smegmatis (strain ATCC 700084 / mc(2)155) (Mycobacterium smegmatis).